A 246-amino-acid chain; its full sequence is Proteasome subunit alpha type-6 (246 aa).

The protein belongs to the peptidase T1A family. As to quaternary structure, the 26S proteasome consists of a 20S proteasome core and two 19S regulatory subunits. The 20S proteasome core is composed of 28 subunits that are arranged in four stacked rings, resulting in a barrel-shaped structure. The two end rings are each formed by seven alpha subunits, and the two central rings are each formed by seven beta subunits. The catalytic chamber with the active sites is on the inside of the barrel.

The protein resides in the cytoplasm. Its subcellular location is the nucleus. Its function is as follows. The proteasome is a multicatalytic proteinase complex which is characterized by its ability to cleave peptides with Arg, Phe, Tyr, Leu, and Glu adjacent to the leaving group at neutral or slightly basic pH. The proteasome has an ATP-dependent proteolytic activity. In Nicotiana tabacum (Common tobacco), this protein is Proteasome subunit alpha type-6 (PAA1).